The primary structure comprises 350 residues: Ceramide synthase 1 (350 aa).

Ala-2 carries the post-translational modification N-acetylalanine. 6 helical membrane passes run 53 to 73 (AHLA…WTAL), 103 to 123 (AWKL…LLGT), 148 to 168 (IAVA…ATVY), 176 to 196 (SVVM…SYAF), 239 to 259 (VANL…LYWF), and 287 to 307 (LLLL…AFAA). The 215-residue stretch at 97–311 (ARLPESAWKL…IVAFAAKVLT (215 aa)) folds into the TLC domain.

In terms of processing, acetylated. Deacetylation by SIRT3 increases enzyme activity and promotes mitochondrial ceramide accumulation. In terms of tissue distribution, expressed in brain, skeletal muscle, heart and perigonadal white adipose tissue.

It is found in the endoplasmic reticulum membrane. It carries out the reaction a sphingoid base + octadecanoyl-CoA = an N-octadecanoyl-sphingoid base + CoA + H(+). The enzyme catalyses sphinganine + octadecanoyl-CoA = N-(octadecanoyl)-sphinganine + CoA + H(+). It catalyses the reaction hexadecasphinganine + octadecanoyl-CoA = N-octadecanoylhexadecasphinganine + CoA + H(+). The catalysed reaction is sphing-4-enine + octadecanoyl-CoA = N-octadecanoylsphing-4-enine + CoA + H(+). It carries out the reaction heptadecasphing-4-enine + octadecanoyl-CoA = N-octadecanoyl-heptadecasphing-4-enine + CoA + H(+). The enzyme catalyses 2-hydroxyoctadecanoyl-CoA + sphinganine = N-(2-hydroxyoctadecanoyl)-sphinganine + CoA + H(+). It catalyses the reaction eicosanoyl-CoA + sphinganine = N-eicosanoylsphinganine + CoA + H(+). The protein operates within lipid metabolism; sphingolipid metabolism. Inhibited by fumonisin B1. In terms of biological role, ceramide synthase that catalyzes the transfer of the acyl chain from acyl-CoA to a sphingoid base, with high selectivity toward stearoyl-CoA (octadecanoyl-CoA; C18:0-CoA). N-acylates sphinganine and sphingosine bases to form dihydroceramides and ceramides in de novo synthesis and salvage pathways, respectively. Plays a predominant role in skeletal muscle in regulating C18 ceramide and dihydroceramide levels with an impact on whole-body glucose metabolism and insulin sensitivity. Protects from diet-induced obesity by suppressing the uptake of glucose in multiple organs in a FGF21-dependent way. Generates C18 ceramides in the brain, playing a critical role in cerebellar development and Purkinje cell function. In response to cellular stress mediates mitophagy, a known defense mechanism against cell transformation and aging. Upon mitochondria fission, generates C18 ceramides that anchor lipidated MAP1LC3B/LC3B-II autophagolysosomes to outer mitochondrial membranes to eliminate damaged mitochondria. This chain is Ceramide synthase 1, found in Mus musculus (Mouse).